Consider the following 184-residue polypeptide: Crossover junction endodeoxyribonuclease RuvC (184 aa).

Active-site residues include aspartate 11, glutamate 73, and aspartate 147. Residues aspartate 11, glutamate 73, and aspartate 147 each coordinate Mg(2+).

It belongs to the RuvC family. Homodimer which binds Holliday junction (HJ) DNA. The HJ becomes 2-fold symmetrical on binding to RuvC with unstacked arms; it has a different conformation from HJ DNA in complex with RuvA. In the full resolvosome a probable DNA-RuvA(4)-RuvB(12)-RuvC(2) complex forms which resolves the HJ. Mg(2+) is required as a cofactor.

Its subcellular location is the cytoplasm. The enzyme catalyses Endonucleolytic cleavage at a junction such as a reciprocal single-stranded crossover between two homologous DNA duplexes (Holliday junction).. The RuvA-RuvB-RuvC complex processes Holliday junction (HJ) DNA during genetic recombination and DNA repair. Endonuclease that resolves HJ intermediates. Cleaves cruciform DNA by making single-stranded nicks across the HJ at symmetrical positions within the homologous arms, yielding a 5'-phosphate and a 3'-hydroxyl group; requires a central core of homology in the junction. The consensus cleavage sequence is 5'-(A/T)TT(C/G)-3'. Cleavage occurs on the 3'-side of the TT dinucleotide at the point of strand exchange. HJ branch migration catalyzed by RuvA-RuvB allows RuvC to scan DNA until it finds its consensus sequence, where it cleaves and resolves the cruciform DNA. The sequence is that of Crossover junction endodeoxyribonuclease RuvC from Neisseria gonorrhoeae (strain ATCC 700825 / FA 1090).